The primary structure comprises 574 residues: Developmental and secondary metabolism regulator veA (574 aa).

Disordered stretches follow at residues 1–22 (MATR…SRIT), 39–60 (ERAR…VDPP), 255–500 (RSSD…GAGK), and 513–548 (RSYE…GRNF). The 206-residue stretch at 25–230 (GKKLTYKLNV…AEQGCRVRIR (206 aa)) folds into the Velvet domain. Residues 39–44 (ERARAC) carry the Nuclear localization signal motif. 2 stretches are compositionally biased toward pro residues: residues 314–323 (RPMPPAPVPA) and 330–341 (PAPPAPPAPPSH). Polar residues-rich tracts occupy residues 343 to 359 (PGYQ…TQYP), 385 to 394 (HARNPSTSAE), 402 to 415 (YPSS…SSYP), and 448 to 458 (VAQSAGPRSQT). The interval 457–501 (QTPSSSLVPSLPPLKALSGDYPNNLSQPSSSISQSPSHDLGAGKK) is PEST. 2 stretches are compositionally biased toward low complexity: residues 459 to 474 (PSSS…KALS) and 482 to 493 (SQPSSSISQSPS). Basic and acidic residues-rich tracts occupy residues 513–525 (RSYE…DDRP) and 532–543 (PDTESHPRRLSD).

It belongs to the velvet family. VeA subfamily. As to quaternary structure, component of the heterotrimeric velvet complex composed of laeA, veA and velB; VeA acting as a bridging protein between laeA and velB.

The protein localises to the nucleus. Its subcellular location is the cytoplasm. In terms of biological role, component of the velvet transcription factor complex that controls sexual/asexual developmental ratio in response to light, promoting sexual development in the darkness while stimulating asexual sporulation under illumination. The velvet complex hat acts as a global regulator for secondary metabolite gene expression. Controls the expression of the aflatoxin gene cluster. Required for the expression of aflR and aflJ. Mediates the coordination of aflatoxigenic vesicles (aflatoxisomes) development with aflatoxin gene expression. Regulates branched chain amino acid and ethanol metabolism and acts as a positive regulator of mitochondrial and peroxisomal beta-oxidation. The chain is Developmental and secondary metabolism regulator veA from Aspergillus parasiticus.